The primary structure comprises 388 residues: Transcriptional regulatory protein EmbR (388 aa).

A DNA-binding region (ompR/PhoB-type) is located at residues 2–105; that stretch reads AGSATVEKRL…AAPPGYRLSI (104 aa). The region spanning 308-357 is the FHA domain; that stretch reads TRIGRLHDNDIVLDSANVSRHHAVIVDTGTNYVINDLRSSNGVHVQHERI.

It belongs to the AfsR/DnrI/RedD regulatory family. In terms of processing, phosphorylated on threonine residue(s).

In terms of biological role, positively regulates the transcription of the embCAB operon. Exhibits ATPase and GTPase activities. The chain is Transcriptional regulatory protein EmbR (embR) from Mycobacterium bovis (strain ATCC BAA-935 / AF2122/97).